The chain runs to 385 residues: Cytochrome b (385 aa).

4 helical membrane-spanning segments follow: residues 32 to 52 (FGSLLGLCLGIQIVTGVTLAM), 76 to 98 (WLVRYLHSNTASAFFFLVYLHIG), 113 to 133 (TWAIGTVILIVMMATAFLGYV), and 179 to 199 (FFALHFLLPFVLAALVIMHLI). Heme b is bound by residues histidine 82 and histidine 96. Heme b is bound by residues histidine 183 and histidine 197. Histidine 202 contacts a ubiquinone. A run of 4 helical transmembrane segments spans residues 226–246 (FVFKDLVTIFIFFIVLSIFVF), 290–310 (LLGVIAMFAAILALMVMPITD), 322–342 (LSKVAFYVFVANFLILMQIGA), and 349–369 (FIEFGQISTVLYFAHFFVIVP).

Belongs to the cytochrome b family. As to quaternary structure, fungal cytochrome b-c1 complex contains 10 subunits; 3 respiratory subunits, 2 core proteins and 5 low-molecular weight proteins. Cytochrome b-c1 complex is a homodimer. The cofactor is heme b.

It is found in the mitochondrion inner membrane. Component of the ubiquinol-cytochrome c reductase complex (complex III or cytochrome b-c1 complex) that is part of the mitochondrial respiratory chain. The b-c1 complex mediates electron transfer from ubiquinol to cytochrome c. Contributes to the generation of a proton gradient across the mitochondrial membrane that is then used for ATP synthesis. This is Cytochrome b (cob) from Aspergillus terreus (strain NIH 2624 / FGSC A1156).